The chain runs to 397 residues: Plasma membrane iron permease (397 aa).

A run of 4 helical transmembrane segments spans residues phenylalanine 61–leucine 81, isoleucine 92–methionine 112, alanine 177–tyrosine 197, and glycine 292–tryptophan 312. Phosphoserine is present on residues serine 337 and serine 338. Residues serine 337–serine 346 show a composition bias toward polar residues. Residues serine 337–alanine 364 form a disordered region. Threonine 340 is modified (phosphothreonine). Phosphoserine occurs at positions 346, 347, and 355. Basic and acidic residues predominate over residues aspartate 349–alanine 364. Threonine 357 is subject to Phosphothreonine. Serine 374, serine 375, and serine 376 each carry phosphoserine.

It belongs to the oxidase-dependent Fe transporter (OFeT) (TC 9.A.10.1) family.

The protein resides in the membrane. Its function is as follows. Permease for high affinity iron uptake. The chain is Plasma membrane iron permease (fip1) from Schizosaccharomyces pombe (strain 972 / ATCC 24843) (Fission yeast).